The sequence spans 474 residues: PTS system N-acetylmuramic acid-specific EIIBC component (474 aa).

One can recognise a PTS EIIB type-1 domain in the interval 1–89 (MAKEISSELL…SELLGEAPVQ (89 aa)). Topologically, residues 1–123 (MAKEISSELL…LAKFATIFTP (123 aa)) are cytoplasmic. The Phosphocysteine intermediate; for EIIB activity role is filled by cysteine 29. A PTS EIIC type-1 domain is found at 115–474 (AKFATIFTPL…LFGCRNVNLD (360 aa)). A helical membrane pass occupies residues 124–144 (LIPGFIAAGLLLGIATLIATV). The Periplasmic segment spans residues 145–157 (MHVPADAQGTLPD). Residues 158–178 (ALNFMKVFSKGLFTFLVILVG) form a helical membrane-spanning segment. Topologically, residues 179-180 (YN) are cytoplasmic. The chain crosses the membrane as a helical span at residues 181 to 201 (AAQAFGGTGVNGAIIAALFLL). Over 202–217 (GYNPAATTGYYAGFHD) the chain is Periplasmic. The chain crosses the membrane as a helical span at residues 218-238 (FFGLPIDPRGNIIGVLIAAWA). At 239–260 (CARIEGMVRRFMPDDLDMLLTS) the chain is on the cytoplasmic side. Residues 261 to 281 (LITLLITATLAYLIIMPLGGW) form a helical membrane-spanning segment. Residues 282 to 301 (LFEGMSWLFMHLNSNPLGCA) lie on the Periplasmic side of the membrane. A helical membrane pass occupies residues 302-322 (VLAGLFLIAVVFGVHQGFIPV). Residues 323–334 (YLALMDSQGFNS) lie on the Cytoplasmic side of the membrane. Residues 335-355 (LFPILSMAGAGQVGAALALYW) form a helical membrane-spanning segment. Over 356-368 (RAQPHSALRSQVR) the chain is Periplasmic. Residues 369–389 (GAIIPGLLGVGEPLIYGVTLP) traverse the membrane as a helical segment. Residues 390-393 (RMKP) are Cytoplasmic-facing. The chain crosses the membrane as a helical span at residues 394–414 (FITACLGGAAGGLFIGLIAWW). Residues 415–440 (GLPMGLNSAFGPSGLVALPLMTSAQG) lie on the Periplasmic side of the membrane. A helical membrane pass occupies residues 441 to 461 (ILPAMAVYAGGILVAWVCGFI). At 462–474 (FTTLFGCRNVNLD) the chain is on the cytoplasmic side.

The protein localises to the cell inner membrane. The enzyme catalyses N-acetyl-beta-D-muramate(out) + N(pros)-phospho-L-histidyl-[protein] = N-acetyl-beta-D-muramate 6-phosphate(in) + L-histidyl-[protein]. The phosphoenolpyruvate-dependent sugar phosphotransferase system (sugar PTS), a major carbohydrate active transport system, catalyzes the phosphorylation of incoming sugar substrates concomitantly with their translocation across the cell membrane. This system is involved in N-acetylmuramic acid (MurNAc) transport, yielding cytoplasmic MurNAc-6-P. Is also able to take up anhydro-N-acetylmuramic acid (anhMurNAc), but cannot phosphorylate the carbon 6, probably because of the 1,6-anhydro ring. The chain is PTS system N-acetylmuramic acid-specific EIIBC component (murP) from Escherichia coli O157:H7.